Consider the following 598-residue polypeptide: Beta-myrcene/(E)-beta-ocimene synthase 2, chloroplastic (598 aa).

A chloroplast-targeting transit peptide spans 1 to 30; it reads MATLCIGSAPIYQNACIHNFRLQRPRRFIS. Residues arginine 307, aspartate 344, aspartate 348, arginine 486, and asparagine 489 each contribute to the (2E)-geranyl diphosphate site. Aspartate 344 and aspartate 348 together coordinate Mg(2+). The short motif at 344-348 is the DDXXD motif element; it reads DDIYD. Mg(2+)-binding residues include asparagine 489, threonine 493, and glutamate 497.

The protein belongs to the terpene synthase family. Tpsb subfamily. It depends on Mg(2+) as a cofactor. Mn(2+) is required as a cofactor. Expressed exclusively in mature flowers, but not in inmmature buds.

It localises to the plastid. The protein resides in the chloroplast. It carries out the reaction (2E)-geranyl diphosphate = beta-myrcene + diphosphate. It functions in the pathway secondary metabolite biosynthesis; terpenoid biosynthesis. In terms of biological role, involved in monoterpene (C10) biosynthesis. The major products are alpha- and beta-pinene, sabinene, beta-myrcene, (E)-beta-ocimene and limonene. The polypeptide is Beta-myrcene/(E)-beta-ocimene synthase 2, chloroplastic (TPS24) (Arabidopsis thaliana (Mouse-ear cress)).